Here is a 266-residue protein sequence, read N- to C-terminus: 22 kDa alpha-zein 4 (266 aa).

Positions 1 to 21 (MATKILSLLALLALFASATNA) are cleaved as a signal peptide.

The protein belongs to the zein family. As to quaternary structure, interacts with OP10 (via N-terminus). Expressed in endosperm, mainly in the peripheral regions.

In terms of biological role, zeins are major seed storage proteins. This Zea mays (Maize) protein is 22 kDa alpha-zein 4.